The sequence spans 977 residues: Glycine dehydrogenase (decarboxylating) (977 aa).

Residue K702 is modified to N6-(pyridoxal phosphate)lysine.

It belongs to the GcvP family. As to quaternary structure, the glycine cleavage system is composed of four proteins: P, T, L and H. Requires pyridoxal 5'-phosphate as cofactor.

The catalysed reaction is N(6)-[(R)-lipoyl]-L-lysyl-[glycine-cleavage complex H protein] + glycine + H(+) = N(6)-[(R)-S(8)-aminomethyldihydrolipoyl]-L-lysyl-[glycine-cleavage complex H protein] + CO2. Its function is as follows. The glycine cleavage system catalyzes the degradation of glycine. The P protein binds the alpha-amino group of glycine through its pyridoxal phosphate cofactor; CO(2) is released and the remaining methylamine moiety is then transferred to the lipoamide cofactor of the H protein. The protein is Glycine dehydrogenase (decarboxylating) of Xanthomonas axonopodis pv. citri (strain 306).